The sequence spans 348 residues: Dihydroorotase (348 aa).

Residues H14 and H16 each contribute to the Zn(2+) site. Residues 16 to 18 (HLR) and N42 contribute to the substrate site. Residues K100, H137, and H175 each coordinate Zn(2+). N6-carboxylysine is present on K100. Position 137 (H137) interacts with substrate. Substrate is bound at residue L220. Position 248 (D248) interacts with Zn(2+). D248 is an active-site residue. Substrate is bound by residues H252 and A264.

The protein belongs to the metallo-dependent hydrolases superfamily. DHOase family. Class II DHOase subfamily. In terms of assembly, homodimer. The cofactor is Zn(2+).

The catalysed reaction is (S)-dihydroorotate + H2O = N-carbamoyl-L-aspartate + H(+). It participates in pyrimidine metabolism; UMP biosynthesis via de novo pathway; (S)-dihydroorotate from bicarbonate: step 3/3. In terms of biological role, catalyzes the reversible cyclization of carbamoyl aspartate to dihydroorotate. The protein is Dihydroorotase of Pseudomonas putida (strain GB-1).